Consider the following 249-residue polypeptide: UDP-2,3-diacylglucosamine hydrolase (249 aa).

5 residues coordinate Mn(2+): Asp7, His9, Asp40, Asn78, and His113. Residue 78–79 (NR) participates in substrate binding. Substrate contacts are provided by Asp121, Ser159, Thr163, Lys166, and His194. Residues His194 and His196 each contribute to the Mn(2+) site.

This sequence belongs to the LpxH family. Mn(2+) serves as cofactor.

It is found in the cell inner membrane. The catalysed reaction is UDP-2-N,3-O-bis[(3R)-3-hydroxytetradecanoyl]-alpha-D-glucosamine + H2O = 2-N,3-O-bis[(3R)-3-hydroxytetradecanoyl]-alpha-D-glucosaminyl 1-phosphate + UMP + 2 H(+). The protein operates within glycolipid biosynthesis; lipid IV(A) biosynthesis; lipid IV(A) from (3R)-3-hydroxytetradecanoyl-[acyl-carrier-protein] and UDP-N-acetyl-alpha-D-glucosamine: step 4/6. In terms of biological role, hydrolyzes the pyrophosphate bond of UDP-2,3-diacylglucosamine to yield 2,3-diacylglucosamine 1-phosphate (lipid X) and UMP by catalyzing the attack of water at the alpha-P atom. Involved in the biosynthesis of lipid A, a phosphorylated glycolipid that anchors the lipopolysaccharide to the outer membrane of the cell. This chain is UDP-2,3-diacylglucosamine hydrolase, found in Pseudomonas fluorescens (strain SBW25).